The chain runs to 380 residues: Cytochrome b (380 aa).

The next 4 membrane-spanning stretches (helical) occupy residues Phe34–Met54, Trp78–Ile99, Trp114–Leu134, and Phe179–Thr199. His84 and His98 together coordinate heme b. Heme b-binding residues include His183 and His197. His202 contacts a ubiquinone. 4 consecutive transmembrane segments (helical) span residues Leu227 to Ser247, Leu289 to His309, Leu321 to Ser341, and Phe348 to Pro368.

This sequence belongs to the cytochrome b family. The cytochrome bc1 complex contains 11 subunits: 3 respiratory subunits (MT-CYB, CYC1 and UQCRFS1), 2 core proteins (UQCRC1 and UQCRC2) and 6 low-molecular weight proteins (UQCRH/QCR6, UQCRB/QCR7, UQCRQ/QCR8, UQCR10/QCR9, UQCR11/QCR10 and a cleavage product of UQCRFS1). This cytochrome bc1 complex then forms a dimer. It depends on heme b as a cofactor.

The protein resides in the mitochondrion inner membrane. Its function is as follows. Component of the ubiquinol-cytochrome c reductase complex (complex III or cytochrome b-c1 complex) that is part of the mitochondrial respiratory chain. The b-c1 complex mediates electron transfer from ubiquinol to cytochrome c. Contributes to the generation of a proton gradient across the mitochondrial membrane that is then used for ATP synthesis. This is Cytochrome b (MT-CYB) from Procellaria westlandica (Westland petrel).